The following is a 157-amino-acid chain: Endoribonuclease YbeY (157 aa).

His123, His127, and His133 together coordinate Zn(2+).

Belongs to the endoribonuclease YbeY family. Zn(2+) is required as a cofactor.

The protein resides in the cytoplasm. Single strand-specific metallo-endoribonuclease involved in late-stage 70S ribosome quality control and in maturation of the 3' terminus of the 16S rRNA. The sequence is that of Endoribonuclease YbeY from Limosilactobacillus fermentum (strain NBRC 3956 / LMG 18251) (Lactobacillus fermentum).